The following is a 601-amino-acid chain: MCGIVGYIGTNNAKGILLEGLEKLEYRGYDSAGIALQNKELVTVVKEKGRIADLASLVPSDAFGTTGIGHTRWATHGKPNHENAHPHQSKSGRFTIVHNGVIENYTLLKEEYLKNHSFVSDTDTEVIVQLIELFAAELSTKEAFKKALSLLHGSYAICLIDQTNTETLYAAKNKSPLLIGKGENFNVIASDAMAVLKETDEFVEIMDKEIVIVTKDGFTLETLEGEEITRASYKAELDASDIEKGTYPHYMLKEIDEQPAVTRKIIQAYQDEAGEINVDKTIIDEILSSDRIHIVACGTSYHAGLVGKNLIEKMAKIPVEVHVSSEFAYNLPLMSKKPLFIFITQSGETADSRQCLVKVKELGYRTLTLTNVPGSTLDREADHSMYLYAGPEIAVASTKAYTAQISVLAVLAVSLGREIGDEEALNINLAAELGIVATAMEAMVSSKEVIEHIAGEYLATSRNAFFLGRNIDYFVAMEAALKLKEISYIQAEGFASGELKHGTIALIEDGTPVLALITQESINWNIRGNVNEVLARGAKTCIFAMENVAQPGDRFVIPQVHPLLTPLASVIPCQLLAYYAALHRDCDVDKPRNLAKSVTVE.

C2 acts as the Nucleophile; for GATase activity in catalysis. One can recognise a Glutamine amidotransferase type-2 domain in the interval 2–216; it reads CGIVGYIGTN…DKEIVIVTKD (215 aa). SIS domains are found at residues 282 to 421 and 453 to 591; these read IIDE…EIGD and IAGE…VDKP. Catalysis depends on K596, which acts as the For Fru-6P isomerization activity.

As to quaternary structure, homodimer.

The protein localises to the cytoplasm. The enzyme catalyses D-fructose 6-phosphate + L-glutamine = D-glucosamine 6-phosphate + L-glutamate. Its function is as follows. Catalyzes the first step in hexosamine metabolism, converting fructose-6P into glucosamine-6P using glutamine as a nitrogen source. The protein is Glutamine--fructose-6-phosphate aminotransferase [isomerizing] of Listeria monocytogenes serovar 1/2a (strain ATCC BAA-679 / EGD-e).